The chain runs to 358 residues: MAVKWTGGHSSPVLCLNASKEGLLASGAEGGDLTAWGEDGTPLGHTRFQGADDVTSVLFSPSCPTKLYASHGETISVLDVRSLKDSLDHFHVNEEEINCLSLNQTENLLASADDSGAIKILDLENKKVIRSLKRHSNICSSVAFRPQRPQSLVSCGLDMQVMLWSLQKARPLWITNLQEDETEEMEGPQSPGQLLNPALAHSISVASCGNIFSCGAEDGKVRIFRVMGVKCEQELGFKGHTSGVSQVCFLPESYLLLTGGNDGKITLWDANSEVEKKQKSPTKRTHRKKPKRGTCTKQGGNTNASVTDEEEHGNILPKLNIEHGEKVNWLLGTKIKGHQNILVADQTSCISVYPLNEF.

WD repeat units lie at residues 1–38 (MAVK…AWGE), 43–80 (LGHT…VLDV), 85–123 (DSLD…ILDL), 127–166 (KVIR…LWSL), 173–225 (WITN…RIFR), and 232–270 (EQEL…LWDA). Residues 273–311 (EVEKKQKSPTKRTHRKKPKRGTCTKQGGNTNASVTDEEE) form a disordered region. The segment covering 279 to 294 (KSPTKRTHRKKPKRGT) has biased composition (basic residues). Over residues 295-306 (CTKQGGNTNASV) the composition is skewed to polar residues. Residues 314 to 355 (NILPKLNIEHGEKVNWLLGTKIKGHQNILVADQTSCISVYPL) form a WD 7 repeat.

The protein belongs to the WD repeat WDR53 family.

The chain is WD repeat-containing protein 53 (WDR53) from Homo sapiens (Human).